Reading from the N-terminus, the 87-residue chain is Alpha-toxin To2 (87 aa).

Positions 1–20 (MIRFVLFISCFFLIGTVVEC) are cleaved as a signal peptide. The region spanning 22–84 (KDGYLMEGDG…IWDSKNNKCG (63 aa)) is the LCN-type CS-alpha/beta domain. Disulfide bonds link cysteine 32–cysteine 83, cysteine 36–cysteine 58, cysteine 44–cysteine 64, and cysteine 48–cysteine 66. Lysine 85 is modified (lysine amide).

In terms of tissue distribution, expressed by the venom gland.

It localises to the secreted. Alpha toxins bind voltage-independently at site-3 of sodium channels (Nav) and inhibit the inactivation of the activated channels, thereby blocking neuronal transmission. Affects the tetrodotoxin-sensitive sodium current permeability of F-11 rat neuroblastoma cells. Produces a dose dependent increase in amplitude and duration of the current. The sequence is that of Alpha-toxin To2 from Tityus obscurus (Amazonian scorpion).